The sequence spans 348 residues: MITRRQSTEIRLGNLTIGGSAPISVQSMTKTDTRNIPATIAQIKELEECGCEIIRLAIPDMEAASALKSIRPKVKIPIVADIHFDYRLALASLSAGVDGLRLNPGNIGDPERVKAVVKSAKEREIPIRIGVNAGSLPKDLPPELTIAQKMVKAAMGHIKILEGLDFGLIKVSLKAFDVPTTIEAYTQIASLIPYPLHVGITETGTPKTGLVRSAVGIGNLLYMGIGDTIRVSLTAPPQEEVFAAYEILKSLNLRQRGPILVSCPTCSRTEVDIVGIASRVQEALNKIDKPIRVAVMGCAVNGPGESKEADLGIACGKGQGLLFRKGEKIAVVPEDELVDALLREIASL.

Positions 263, 266, 298, and 305 each coordinate [4Fe-4S] cluster.

It belongs to the IspG family. It depends on [4Fe-4S] cluster as a cofactor.

It catalyses the reaction (2E)-4-hydroxy-3-methylbut-2-enyl diphosphate + oxidized [flavodoxin] + H2O + 2 H(+) = 2-C-methyl-D-erythritol 2,4-cyclic diphosphate + reduced [flavodoxin]. Its pathway is isoprenoid biosynthesis; isopentenyl diphosphate biosynthesis via DXP pathway; isopentenyl diphosphate from 1-deoxy-D-xylulose 5-phosphate: step 5/6. Its function is as follows. Converts 2C-methyl-D-erythritol 2,4-cyclodiphosphate (ME-2,4cPP) into 1-hydroxy-2-methyl-2-(E)-butenyl 4-diphosphate. This Dehalococcoides mccartyi (strain CBDB1) protein is 4-hydroxy-3-methylbut-2-en-1-yl diphosphate synthase (flavodoxin).